A 539-amino-acid polypeptide reads, in one-letter code: Sodium/hydrogen exchanger 9B2 (539 aa).

Over 1 to 94 (MEDSLFSVDK…ACPPQGCFSL (94 aa)) the chain is Cytoplasmic. A helical transmembrane segment spans residues 95–112 (AITNVTMVILIWAVVWSI). The Extracellular portion of the chain corresponds to 113-121 (TGPECLPGG). A helical membrane pass occupies residues 122–141 (NLFGILALLFSAALGGKLIS). Residues 142 to 152 (LIKIPSLPPLP) are Cytoplasmic-facing. A helical transmembrane segment spans residues 153–169 (PLLGMLLAGFLIRNIPV). Residues 170 to 179 (ITDQVQIHHK) are Extracellular-facing. A helical transmembrane segment spans residues 180–197 (WSAALRNIALAIILVRAG). Residues 198-208 (LGLDPKALRKL) are Cytoplasmic-facing. The chain crosses the membrane as a helical span at residues 209-235 (KAVCLRLSFGPCVVESCTAAVVSHFIM). Topologically, residues 236–241 (GFPLTW) are extracellular. Residues 242–250 (GFMLGFVLG) traverse the membrane as a helical segment. The Cytoplasmic portion of the chain corresponds to 251–278 (AVSPAVVVPSMLILQKEGFGVDKGIPTL). Positions 252, 283, 286, and 287 each coordinate Na(+). A helical transmembrane segment spans residues 279–298 (LMAAGSFDDVLAITGFNTCL). Residues 299-308 (GMAFSSGSTL) lie on the Extracellular side of the membrane. A helical membrane pass occupies residues 309 to 332 (NTIVRGVLEVVVGIAAGLLFGFFL). Residues 333–347 (HYFPSKDQENLKGKR) are Cytoplasmic-facing. Residues 348–365 (SYLILALSVFAVFGSLYF) form a helical membrane-spanning segment. The Extracellular portion of the chain corresponds to 366–369 (GFPG). A helical transmembrane segment spans residues 370 to 381 (SGGLCTLVMAFL). At 382 to 398 (AGIGWSTDKTVVEDIIA) the chain is on the cytoplasmic side. Residues 399–419 (VSWDIFQPLLFGLIGAEISVA) form a helical membrane-spanning segment. Topologically, residues 420-425 (SLKPET) are extracellular. Residues 426–448 (VGLCTATLIIALIIRICISFLMV) form a helical membrane-spanning segment. The Cytoplasmic segment spans residues 449 to 469 (CFSGFSLKEKIFISLAWMPKA). The helical transmembrane segment at 470-481 (TVQAAIGSVALD) threads the bilayer. Residues 482 to 494 (TARTLENKQFEDY) lie on the Extracellular side of the membrane. Residues 495-517 (GMDVLTVAFLGILVTAPIGALVI) form a helical membrane-spanning segment. The Cytoplasmic portion of the chain corresponds to 518–539 (GLTGPKMLEKSESRTVTEEGSV).

It belongs to the monovalent cation:proton antiporter 1 (CPA1) transporter (TC 2.A.36) family. In terms of assembly, homodimer; dimerization is essential for SLC9B2 activity. Lipids seem to play a role in the stabilization of the dimerization subdomain.

The protein resides in the cell membrane. It is found in the mitochondrion membrane. Its subcellular location is the endosome membrane. It localises to the recycling endosome membrane. The protein localises to the cytoplasmic vesicle. The protein resides in the secretory vesicle. It is found in the synaptic vesicle membrane. Its subcellular location is the basolateral cell membrane. It localises to the apical cell membrane. The catalysed reaction is Li(+)(out) + H(+)(in) = Li(+)(in) + H(+)(out). The enzyme catalyses Li(+)(in) + Na(+)(out) = Li(+)(out) + Na(+)(in). It carries out the reaction Na(+)(in) + H(+)(out) = Na(+)(out) + H(+)(in). With respect to regulation, allosterically inhibited by the N-terminal domain. Inhibited by phloretin. Functionally, electroneutral Na(+) Li(+)/H(+) antiporter that extrudes Na(+) or Li(+) in exchange for external protons across the membrane. Uses the proton gradient/membrane potential to extrude sodium. Contributes to the regulation of intracellular pH and sodium homeostasis. Also able to mediate Na(+)/Li(+) antiporter activity in kidney. This Xenopus tropicalis (Western clawed frog) protein is Sodium/hydrogen exchanger 9B2 (slc9b2).